We begin with the raw amino-acid sequence, 375 residues long: 23S rRNA (uracil(747)-C(5))-methyltransferase RlmC (375 aa).

Residues Cys3, Cys11, Cys14, and Cys87 each contribute to the [4Fe-4S] cluster site. S-adenosyl-L-methionine is bound by residues Gln212, Phe241, Glu262, and Asn307. Cys334 functions as the Nucleophile in the catalytic mechanism.

The protein belongs to the class I-like SAM-binding methyltransferase superfamily. RNA M5U methyltransferase family. RlmC subfamily.

The catalysed reaction is uridine(747) in 23S rRNA + S-adenosyl-L-methionine = 5-methyluridine(747) in 23S rRNA + S-adenosyl-L-homocysteine + H(+). Catalyzes the formation of 5-methyl-uridine at position 747 (m5U747) in 23S rRNA. This chain is 23S rRNA (uracil(747)-C(5))-methyltransferase RlmC, found in Escherichia fergusonii (strain ATCC 35469 / DSM 13698 / CCUG 18766 / IAM 14443 / JCM 21226 / LMG 7866 / NBRC 102419 / NCTC 12128 / CDC 0568-73).